The following is a 334-amino-acid chain: O(6)-methylguanine-induced apoptosis 2 (334 aa).

The disordered stretch occupies residues M1–P60. Over residues K7–E20 the composition is skewed to basic and acidic residues. Over residues Y29 to S42 the composition is skewed to polar residues. STPGR repeat units follow at residues P67–V74, P109–P117, P148–A155, G187–T206, G225–P257, P267–K282, and L306–L316. Residue Y72 is modified to Phosphotyrosine.

Belongs to the STPG1 family.

The protein localises to the cytoplasm. The protein resides in the nucleus. Its function is as follows. May positively contribute to the induction of apoptosis triggered by O(6)-methylguanine. In Homo sapiens (Human), this protein is O(6)-methylguanine-induced apoptosis 2 (STPG1).